Reading from the N-terminus, the 530-residue chain is MMSIWDALREKQAQVSDRSILSLFDDPGRAQEYSAKTGDLFFDFSKTNIDDEALNLLSGLLDASGMAQKRTAMFSGQPINDTEGRAVLHTALRNLDGGPVLVNGTDVMPGVLATLERMRVFAQGVRDSDVTDVVNIGIGGSDLGPAMAVAALSPYHDGPRCHFVSNVDGAHIADTLRGLDAKKTLVIVASKTFTTIETMTNARTARAWMTEHGGDPKAQFAALSTADDLTAAFGIPPERVFGFEDWVGGRYSVWGPIGLSLMIAIGPRAFDAFLRGGQAMDRHFQAADWRENLPVLLALVGVWHAQVCGCSSRAVLPYDQRLAKLPDYLQQLEMESNGKSVQIGGADVTVDSGPIVWGAAGTNGQHAFYQLIHQGTRVVPCEFLVAAEGHEPELAHHHNLLVANCLAQSEALMRGRSIEDARAKMVQAGFTGQELERQARHRVFAGNRPSVTLAYPKLDPFMLGQIIALYEHRVFVEGVILGINSYDQWGVELGKELATSLQPIVDGEAPADGKDGSTAQLVGYVIANRG.

Catalysis depends on E335, which acts as the Proton donor. Catalysis depends on residues H366 and K495.

This sequence belongs to the GPI family.

The protein localises to the cytoplasm. The enzyme catalyses alpha-D-glucose 6-phosphate = beta-D-fructose 6-phosphate. It participates in carbohydrate biosynthesis; gluconeogenesis. The protein operates within carbohydrate degradation; glycolysis; D-glyceraldehyde 3-phosphate and glycerone phosphate from D-glucose: step 2/4. In terms of biological role, catalyzes the reversible isomerization of glucose-6-phosphate to fructose-6-phosphate. This Roseobacter denitrificans (strain ATCC 33942 / OCh 114) (Erythrobacter sp. (strain OCh 114)) protein is Glucose-6-phosphate isomerase.